The primary structure comprises 314 residues: Homoserine O-succinyltransferase (314 aa).

Residue Cys142 is the Acyl-thioester intermediate of the active site. Substrate is bound by residues Lys163 and Ser192. Residue His235 is the Proton acceptor of the active site. Glu237 is an active-site residue. Position 249 (Arg249) interacts with substrate.

This sequence belongs to the MetA family.

It is found in the cytoplasm. The catalysed reaction is L-homoserine + succinyl-CoA = O-succinyl-L-homoserine + CoA. It functions in the pathway amino-acid biosynthesis; L-methionine biosynthesis via de novo pathway; O-succinyl-L-homoserine from L-homoserine: step 1/1. Its function is as follows. Transfers a succinyl group from succinyl-CoA to L-homoserine, forming succinyl-L-homoserine. This Shewanella pealeana (strain ATCC 700345 / ANG-SQ1) protein is Homoserine O-succinyltransferase.